The chain runs to 205 residues: Beta-crystallin B2 (205 aa).

An N-acetylalanine modification is found at Ala-2. The tract at residues 2–16 (ASDHQTQAGKPQPLN) is N-terminal arm. 2 Beta/gamma crystallin 'Greek key' domains span residues 17–56 (PKII…LVQA) and 57–101 (GPWV…RPIK). Positions 102–106 (VDSQE) are connecting peptide. Beta/gamma crystallin 'Greek key' domains are found at residues 107–148 (HKII…RVQS) and 149–191 (GTWV…RRIR). Positions 193–205 (MQWHQRGAFHPTN) are C-terminal arm.

The protein belongs to the beta/gamma-crystallin family. In terms of assembly, homo/heterodimer, or complexes of higher-order. The structure of beta-crystallin oligomers seems to be stabilized through interactions between the N-terminal arms.

Functionally, crystallins are the dominant structural components of the vertebrate eye lens. This Oryctolagus cuniculus (Rabbit) protein is Beta-crystallin B2 (CRYBB2).